The primary structure comprises 119 residues: Dihydroneopterin aldolase (119 aa).

Substrate-binding positions include Glu-21, Tyr-53, and 72-73; that span reads IE. The Proton donor/acceptor role is filled by Lys-99.

It belongs to the DHNA family.

It carries out the reaction 7,8-dihydroneopterin = 6-hydroxymethyl-7,8-dihydropterin + glycolaldehyde. Its pathway is cofactor biosynthesis; tetrahydrofolate biosynthesis; 2-amino-4-hydroxy-6-hydroxymethyl-7,8-dihydropteridine diphosphate from 7,8-dihydroneopterin triphosphate: step 3/4. In terms of biological role, catalyzes the conversion of 7,8-dihydroneopterin to 6-hydroxymethyl-7,8-dihydropterin. The protein is Dihydroneopterin aldolase (folB) of Streptococcus pyogenes serotype M1.